We begin with the raw amino-acid sequence, 350 residues long: Ferredoxin--NADP reductase (350 aa).

FAD is bound by residues Asp-49, Gln-57, Tyr-62, Val-102, Phe-136, Asp-303, and Thr-344.

The protein belongs to the ferredoxin--NADP reductase type 2 family. Homodimer. Requires FAD as cofactor.

It catalyses the reaction 2 reduced [2Fe-2S]-[ferredoxin] + NADP(+) + H(+) = 2 oxidized [2Fe-2S]-[ferredoxin] + NADPH. This chain is Ferredoxin--NADP reductase, found in Granulibacter bethesdensis (strain ATCC BAA-1260 / CGDNIH1).